The chain runs to 305 residues: Methionyl-tRNA formyltransferase (305 aa).

Residue 110–113 (SLLP) coordinates (6S)-5,6,7,8-tetrahydrofolate.

The protein belongs to the Fmt family.

The catalysed reaction is L-methionyl-tRNA(fMet) + (6R)-10-formyltetrahydrofolate = N-formyl-L-methionyl-tRNA(fMet) + (6S)-5,6,7,8-tetrahydrofolate + H(+). Functionally, attaches a formyl group to the free amino group of methionyl-tRNA(fMet). The formyl group appears to play a dual role in the initiator identity of N-formylmethionyl-tRNA by promoting its recognition by IF2 and preventing the misappropriation of this tRNA by the elongation apparatus. The sequence is that of Methionyl-tRNA formyltransferase from Gluconacetobacter diazotrophicus (strain ATCC 49037 / DSM 5601 / CCUG 37298 / CIP 103539 / LMG 7603 / PAl5).